A 342-amino-acid chain; its full sequence is Dihydroorotate dehydrogenase (quinone) (342 aa).

FMN-binding positions include 61–65 and threonine 85; that span reads AGLDK. Residue lysine 65 coordinates substrate. 110 to 114 serves as a coordination point for substrate; sequence NRMGF. FMN is bound by residues asparagine 138 and asparagine 171. Asparagine 171 is a binding site for substrate. Serine 174 (nucleophile) is an active-site residue. Substrate is bound at residue asparagine 176. FMN-binding residues include lysine 216 and threonine 244. Position 245-246 (245-246) interacts with substrate; it reads NT. Residues glycine 267, glycine 296, and 317–318 contribute to the FMN site; that span reads YS.

This sequence belongs to the dihydroorotate dehydrogenase family. Type 2 subfamily. Monomer. Requires FMN as cofactor.

It is found in the cell membrane. It catalyses the reaction (S)-dihydroorotate + a quinone = orotate + a quinol. The protein operates within pyrimidine metabolism; UMP biosynthesis via de novo pathway; orotate from (S)-dihydroorotate (quinone route): step 1/1. Its function is as follows. Catalyzes the conversion of dihydroorotate to orotate with quinone as electron acceptor. In Cellvibrio japonicus (strain Ueda107) (Pseudomonas fluorescens subsp. cellulosa), this protein is Dihydroorotate dehydrogenase (quinone).